Here is a 137-residue protein sequence, read N- to C-terminus: Transcription antitermination protein NusB (137 aa).

This sequence belongs to the NusB family.

Involved in transcription antitermination. Required for transcription of ribosomal RNA (rRNA) genes. Binds specifically to the boxA antiterminator sequence of the ribosomal RNA (rrn) operons. The chain is Transcription antitermination protein NusB from Borreliella afzelii (strain PKo) (Borrelia afzelii).